We begin with the raw amino-acid sequence, 332 residues long: Homoarginine-6-hydroxylase 2-ODD-C23.1 (332 aa).

Residues 182-287 enclose the Fe2OG dioxygenase domain; that stretch reads PFWVMRLIGY…RVCVAFFYET (106 aa). 3 residues coordinate Fe cation: His210, Asp212, and His268. Arg278 lines the 2-oxoglutarate pocket.

The protein belongs to the iron/ascorbate-dependent oxidoreductase family. Requires Fe(2+) as cofactor.

The protein resides in the cytoplasm. It localises to the cytosol. The catalysed reaction is L-homoarginine + 2-oxoglutarate + O2 = 6-hydroxy-L-homoarginine + succinate + CO2. Slightly inhibited by canavanine (Can), the 5-oxa-analog of arginine. In terms of biological role, 2-oxoglutarate-dependent dioxygenase catalyzing homoarginine 6-hydroxylation thus producing 6-hydroxy-L-homoarginine. Guanidine (Gd) is in turn synthesized by the spontaneous conversion of 6-hydroxy-L-homoarginine to (S)-2-amino-6-oxohexanoate (RHEA:79843); guanidine is a nitrogen-rich compound that can serve as a defense or signaling substance. In Arabidopsis thaliana (Mouse-ear cress), this protein is Homoarginine-6-hydroxylase 2-ODD-C23.1.